The following is a 401-amino-acid chain: ATP-dependent RNA helicase FAL1 (401 aa).

Residues 27–55 carry the Q motif motif; it reads PTFESMSLKENLLRGIYAYGYESPSAVQS. In terms of domain architecture, Helicase ATP-binding spans 58–228; the sequence is IVQVCKGRDT…TKFMTDPVRI (171 aa). 71–78 is a binding site for ATP; it reads AQSGTGKT. The DEAD box motif lies at 176 to 179; sequence DEAD. Positions 239–400 constitute a Helicase C-terminal domain; it reads GLKQYFIAVE…EMPMNVADLI (162 aa).

This sequence belongs to the DEAD box helicase family. DDX48/FAL1 subfamily.

It is found in the nucleus. It localises to the nucleolus. It catalyses the reaction ATP + H2O = ADP + phosphate + H(+). ATP-dependent RNA helicase involved in 40S ribosomal subunit biogenesis. Required for the processing and cleavage of 35S pre-rRNA at sites A0, A1, and A2, leading to mature 18S rRNA. The protein is ATP-dependent RNA helicase FAL1 (FAL1) of Gibberella zeae (strain ATCC MYA-4620 / CBS 123657 / FGSC 9075 / NRRL 31084 / PH-1) (Wheat head blight fungus).